The primary structure comprises 476 residues: tRNA(Ile)-lysidine synthase (476 aa).

Position 30–35 (30–35 (SGGPDS)) interacts with ATP.

It belongs to the tRNA(Ile)-lysidine synthase family.

Its subcellular location is the cytoplasm. The catalysed reaction is cytidine(34) in tRNA(Ile2) + L-lysine + ATP = lysidine(34) in tRNA(Ile2) + AMP + diphosphate + H(+). In terms of biological role, ligates lysine onto the cytidine present at position 34 of the AUA codon-specific tRNA(Ile) that contains the anticodon CAU, in an ATP-dependent manner. Cytidine is converted to lysidine, thus changing the amino acid specificity of the tRNA from methionine to isoleucine. This Bacillus thuringiensis subsp. konkukian (strain 97-27) protein is tRNA(Ile)-lysidine synthase.